Consider the following 78-residue polypeptide: Large ribosomal subunit protein bL28 (78 aa).

The disordered stretch occupies residues 1-25 (MSRVCQVTGKRPAVGNNRSHAKNAT).

This sequence belongs to the bacterial ribosomal protein bL28 family.

The chain is Large ribosomal subunit protein bL28 from Vibrio cholerae serotype O1 (strain ATCC 39541 / Classical Ogawa 395 / O395).